The primary structure comprises 536 residues: Membrane protein insertase YidC (536 aa).

The next 5 membrane-spanning stretches (helical) occupy residues 7 to 27 (LLVMGLLLVSFLIFTQWQQDF), 332 to 352 (FWLLIFIHSIIGNWGLAIMGV), 411 to 431 (MGGCLPLILQMPIFIALYWTF), 449 to 469 (LSAQDPYYIFPVLMGLSMFLL), and 488 to 508 (FMPVIFTVFFLWFPSGLVLYW).

Belongs to the OXA1/ALB3/YidC family. Type 1 subfamily. As to quaternary structure, interacts with the Sec translocase complex via SecD. Specifically interacts with transmembrane segments of nascent integral membrane proteins during membrane integration.

It is found in the cell inner membrane. Functionally, required for the insertion and/or proper folding and/or complex formation of integral membrane proteins into the membrane. Involved in integration of membrane proteins that insert both dependently and independently of the Sec translocase complex, as well as at least some lipoproteins. Aids folding of multispanning membrane proteins. This chain is Membrane protein insertase YidC, found in Haemophilus ducreyi (strain 35000HP / ATCC 700724).